Consider the following 396-residue polypeptide: Elongation factor Tu 1 (396 aa).

In terms of domain architecture, tr-type G spans 10 to 206; the sequence is KPHCNIGTIG…TVDDYIPQPD (197 aa). Positions 19-26 are G1; that stretch reads GHVDHGKT. 19–26 serves as a coordination point for GTP; the sequence is GHVDHGKT. Residue Thr26 coordinates Mg(2+). A G2 region spans residues 60–64; that stretch reads GITIN. The segment at 81–84 is G3; that stretch reads DCPG. GTP contacts are provided by residues 81-85 and 136-139; these read DCPGH and NKVD. Residues 136-139 are G4; it reads NKVD. Residues 174–176 form a G5 region; sequence SAK.

Belongs to the TRAFAC class translation factor GTPase superfamily. Classic translation factor GTPase family. EF-Tu/EF-1A subfamily. In terms of assembly, monomer.

Its subcellular location is the cytoplasm. The catalysed reaction is GTP + H2O = GDP + phosphate + H(+). Functionally, GTP hydrolase that promotes the GTP-dependent binding of aminoacyl-tRNA to the A-site of ribosomes during protein biosynthesis. The chain is Elongation factor Tu 1 from Caulobacter sp. (strain K31).